Here is a 434-residue protein sequence, read N- to C-terminus: Adenylosuccinate synthetase (434 aa).

GTP is bound by residues 22 to 28 (GDEGKGK) and 50 to 52 (GHT). D23 (proton acceptor) is an active-site residue. Mg(2+) is bound by residues D23 and G50. IMP is bound by residues 23 to 26 (DEGK), 48 to 51 (NAGH), T139, R153, Q234, T249, and R313. The active-site Proton donor is H51. Substrate is bound at residue 309 to 315 (ATTGRKR). GTP-binding positions include R315, 341-343 (KLD), and 423-425 (SVG).

Belongs to the adenylosuccinate synthetase family. Homodimer. Mg(2+) serves as cofactor.

Its subcellular location is the cytoplasm. The enzyme catalyses IMP + L-aspartate + GTP = N(6)-(1,2-dicarboxyethyl)-AMP + GDP + phosphate + 2 H(+). It participates in purine metabolism; AMP biosynthesis via de novo pathway; AMP from IMP: step 1/2. In terms of biological role, plays an important role in the de novo pathway of purine nucleotide biosynthesis. Catalyzes the first committed step in the biosynthesis of AMP from IMP. In Chlorobium phaeobacteroides (strain DSM 266 / SMG 266 / 2430), this protein is Adenylosuccinate synthetase.